Here is a 353-residue protein sequence, read N- to C-terminus: UPF0283 membrane protein YcjF (353 aa).

A run of 3 helical transmembrane segments spans residues 70-90, 100-120, and 213-233; these read MVMG…VQWT, VALG…GSVV, and ESTL…FIAW.

It belongs to the UPF0283 family.

Its subcellular location is the cell inner membrane. This is UPF0283 membrane protein YcjF from Escherichia coli O7:K1 (strain IAI39 / ExPEC).